The following is a 733-amino-acid chain: Putative cyclic nucleotide-gated ion channel 9 (733 aa).

The Cytoplasmic portion of the chain corresponds to 1–117 (MLDCGKKAVK…DKFLLLCNKL (117 aa)). The chain crosses the membrane as a helical span at residues 118–138 (FVTSCILAVSVDPLFLYLPFV). Residues 139–151 (KDNEKCIGIDRKL) lie on the Extracellular side of the membrane. The chain crosses the membrane as a helical span at residues 152–172 (AIIATTLRTVIDAFYLFHMAL). Over 173 to 207 (RFRTAFVAPSSRVFGRGELVIDPAQIAKRYLQQYF) the chain is Cytoplasmic. A helical transmembrane segment spans residues 208–228 (IIDFLSVLPLPQIVVWRFLYI). The Extracellular segment spans residues 229 to 239 (SKGASVLATKR). Residues 240–260 (ALRSIILVQYIPRFIRLYPLS) form a helical membrane-spanning segment. Topologically, residues 261–280 (SELKRTAGVFAETAWAGAAY) are cytoplasmic. A helical membrane pass occupies residues 281 to 301 (YLLLYMLASHIVGAIWYLLAL). Over 302 to 406 (ERYNGCWTKV…GQGLETSTYP (105 aa)) the chain is Extracellular. Residues 407 to 427 (GEVIFSIALAIAGLLLFALLI) form a helical membrane-spanning segment. The Cytoplasmic segment spans residues 428–733 (GNMQTYLQSL…EPDFSADDTS (306 aa)). A nucleoside 3',5'-cyclic phosphate contacts are provided by residues 513–637 (LFEN…SRQV) and Glu-584. Positions 629-644 (FRRLHSRQVQHTFRFY) are calmodulin-binding. Positions 649–678 (RTWAAIFIQAAWRRYVKKKKLEQLRKEEEE) constitute an IQ domain.

It belongs to the cyclic nucleotide-gated cation channel (TC 1.A.1.5) family. In terms of assembly, homotetramer or heterotetramer.

It localises to the cell membrane. Its function is as follows. Putative cyclic nucleotide-gated ion channel. The chain is Putative cyclic nucleotide-gated ion channel 9 (CNGC9) from Arabidopsis thaliana (Mouse-ear cress).